We begin with the raw amino-acid sequence, 283 residues long: Phosphatidylserine decarboxylase proenzyme (283 aa).

Active-site charge relay system; for autoendoproteolytic cleavage activity residues include Asp-96, His-152, and Ser-250. The active-site Schiff-base intermediate with substrate; via pyruvic acid; for decarboxylase activity is the Ser-250. Pyruvic acid (Ser); by autocatalysis is present on Ser-250.

The protein belongs to the phosphatidylserine decarboxylase family. PSD-B subfamily. Prokaryotic type I sub-subfamily. Heterodimer of a large membrane-associated beta subunit and a small pyruvoyl-containing alpha subunit. The cofactor is pyruvate. Is synthesized initially as an inactive proenzyme. Formation of the active enzyme involves a self-maturation process in which the active site pyruvoyl group is generated from an internal serine residue via an autocatalytic post-translational modification. Two non-identical subunits are generated from the proenzyme in this reaction, and the pyruvate is formed at the N-terminus of the alpha chain, which is derived from the carboxyl end of the proenzyme. The autoendoproteolytic cleavage occurs by a canonical serine protease mechanism, in which the side chain hydroxyl group of the serine supplies its oxygen atom to form the C-terminus of the beta chain, while the remainder of the serine residue undergoes an oxidative deamination to produce ammonia and the pyruvoyl prosthetic group on the alpha chain. During this reaction, the Ser that is part of the protease active site of the proenzyme becomes the pyruvoyl prosthetic group, which constitutes an essential element of the active site of the mature decarboxylase.

The protein localises to the cell membrane. It carries out the reaction a 1,2-diacyl-sn-glycero-3-phospho-L-serine + H(+) = a 1,2-diacyl-sn-glycero-3-phosphoethanolamine + CO2. It functions in the pathway phospholipid metabolism; phosphatidylethanolamine biosynthesis; phosphatidylethanolamine from CDP-diacylglycerol: step 2/2. In terms of biological role, catalyzes the formation of phosphatidylethanolamine (PtdEtn) from phosphatidylserine (PtdSer). In Acinetobacter baumannii (strain ACICU), this protein is Phosphatidylserine decarboxylase proenzyme.